We begin with the raw amino-acid sequence, 166 residues long: Cyclic pyranopterin monophosphate synthase (166 aa).

Residues 83–85 (LCH) and 121–122 (ME) each bind substrate. The active site involves Asp-136.

Belongs to the MoaC family. As to quaternary structure, homohexamer; trimer of dimers.

It catalyses the reaction (8S)-3',8-cyclo-7,8-dihydroguanosine 5'-triphosphate = cyclic pyranopterin phosphate + diphosphate. The protein operates within cofactor biosynthesis; molybdopterin biosynthesis. Catalyzes the conversion of (8S)-3',8-cyclo-7,8-dihydroguanosine 5'-triphosphate to cyclic pyranopterin monophosphate (cPMP). This is Cyclic pyranopterin monophosphate synthase from Syntrophobacter fumaroxidans (strain DSM 10017 / MPOB).